A 347-amino-acid polypeptide reads, in one-letter code: Probable magnetosome protein Mms36 (347 aa).

The helical transmembrane segment at 25 to 45 (VLVLYLAIAVVVAVLAWPWLA) threads the bilayer.

It localises to the magnetosome membrane. The 4 genes of this operon collectively influence magnetosome size and number. The sequence is that of Probable magnetosome protein Mms36 from Magnetospirillum gryphiswaldense (strain DSM 6361 / JCM 21280 / NBRC 15271 / MSR-1).